A 97-amino-acid polypeptide reads, in one-letter code: Large ribosomal subunit protein bL31 (97 aa).

A disordered region spans residues 75–97 (NKTKKSNQAKVEKQTRHRSINEL). A compositionally biased stretch (basic and acidic residues) spans 84-97 (KVEKQTRHRSINEL).

This sequence belongs to the bacterial ribosomal protein bL31 family. Type A subfamily. Part of the 50S ribosomal subunit.

Functionally, binds the 23S rRNA. The polypeptide is Large ribosomal subunit protein bL31 (Mycoplasma genitalium (strain ATCC 33530 / DSM 19775 / NCTC 10195 / G37) (Mycoplasmoides genitalium)).